A 366-amino-acid chain; its full sequence is tRNA/tmRNA (uracil-C(5))-methyltransferase (366 aa).

S-adenosyl-L-methionine is bound by residues Q190, Y218, N223, E239, and D299. Catalysis depends on C324, which acts as the Nucleophile. The Proton acceptor role is filled by E358.

Belongs to the class I-like SAM-binding methyltransferase superfamily. RNA M5U methyltransferase family. TrmA subfamily.

It carries out the reaction uridine(54) in tRNA + S-adenosyl-L-methionine = 5-methyluridine(54) in tRNA + S-adenosyl-L-homocysteine + H(+). It catalyses the reaction uridine(341) in tmRNA + S-adenosyl-L-methionine = 5-methyluridine(341) in tmRNA + S-adenosyl-L-homocysteine + H(+). Functionally, dual-specificity methyltransferase that catalyzes the formation of 5-methyluridine at position 54 (m5U54) in all tRNAs, and that of position 341 (m5U341) in tmRNA (transfer-mRNA). This Escherichia fergusonii (strain ATCC 35469 / DSM 13698 / CCUG 18766 / IAM 14443 / JCM 21226 / LMG 7866 / NBRC 102419 / NCTC 12128 / CDC 0568-73) protein is tRNA/tmRNA (uracil-C(5))-methyltransferase.